Consider the following 261-residue polypeptide: Zinc import ATP-binding protein ZnuC (261 aa).

Residues 6–221 (IRLEQVGVTF…PAFVELFGKN (216 aa)) enclose the ABC transporter domain. 38–45 (GPNGAGKT) contributes to the ATP binding site.

The protein belongs to the ABC transporter superfamily. Zinc importer (TC 3.A.1.15.5) family. In terms of assembly, the complex is composed of two ATP-binding proteins (ZnuC), two transmembrane proteins (ZnuB) and a solute-binding protein (ZnuA).

The protein localises to the cell inner membrane. The enzyme catalyses Zn(2+)(out) + ATP(in) + H2O(in) = Zn(2+)(in) + ADP(in) + phosphate(in) + H(+)(in). Its function is as follows. Part of the ABC transporter complex ZnuABC involved in zinc import. Responsible for energy coupling to the transport system. This chain is Zinc import ATP-binding protein ZnuC, found in Pseudomonas fluorescens (strain ATCC BAA-477 / NRRL B-23932 / Pf-5).